Here is a 104-residue protein sequence, read N- to C-terminus: Large ribosomal subunit protein uL24 (104 aa).

Belongs to the universal ribosomal protein uL24 family. In terms of assembly, part of the 50S ribosomal subunit.

Functionally, one of two assembly initiator proteins, it binds directly to the 5'-end of the 23S rRNA, where it nucleates assembly of the 50S subunit. Its function is as follows. One of the proteins that surrounds the polypeptide exit tunnel on the outside of the subunit. This is Large ribosomal subunit protein uL24 from Enterobacter sp. (strain 638).